The chain runs to 179 residues: Large ribosomal subunit protein uL6 (179 aa).

The protein belongs to the universal ribosomal protein uL6 family. In terms of assembly, part of the 50S ribosomal subunit.

This protein binds to the 23S rRNA, and is important in its secondary structure. It is located near the subunit interface in the base of the L7/L12 stalk, and near the tRNA binding site of the peptidyltransferase center. This Parasynechococcus marenigrum (strain WH8102) protein is Large ribosomal subunit protein uL6.